Reading from the N-terminus, the 121-residue chain is Small ribosomal subunit protein uS13 (121 aa).

The segment at 94–121 (GLPVRGQNTKNNSRTRKGPRRTVANKKK) is disordered. Over residues 106 to 121 (SRTRKGPRRTVANKKK) the composition is skewed to basic residues.

Belongs to the universal ribosomal protein uS13 family. As to quaternary structure, part of the 30S ribosomal subunit. Forms a loose heterodimer with protein S19. Forms two bridges to the 50S subunit in the 70S ribosome.

Its function is as follows. Located at the top of the head of the 30S subunit, it contacts several helices of the 16S rRNA. In the 70S ribosome it contacts the 23S rRNA (bridge B1a) and protein L5 of the 50S subunit (bridge B1b), connecting the 2 subunits; these bridges are implicated in subunit movement. Contacts the tRNAs in the A and P-sites. The polypeptide is Small ribosomal subunit protein uS13 (Exiguobacterium sibiricum (strain DSM 17290 / CCUG 55495 / CIP 109462 / JCM 13490 / 255-15)).